The sequence spans 260 residues: MKPKISFNNVVMRYGGFLALDRLNLDIADGEFVTVVGPSGCGKSTAMNIAAGLLQPSGGEILVGDKPVTGPGPERGVIFQQYALFPWLTVRQNVEFGLSVAGMSRVKRREISDHYLSLVGLTDFADALPKALSGGMKQRCAIARAYAAAPEILLMDEPFGALDALTRVHMQDQLLDAWSRERRTVMFITHDVDEAVYLANRVIVMAARPGRLDQIIPVDLPYPRTEAIRLSPEFAAIRNRVWHAVYHQQPQTDQQSSHGQ.

An ABC transporter domain is found at 5-228 (ISFNNVVMRY…DLPYPRTEAI (224 aa)). 37–44 (GPSGCGKS) is a binding site for ATP.

Belongs to the ABC transporter superfamily. The complex is composed of two ATP-binding proteins (BAB2_1147), two transmembrane proteins (BAB2_1148) and a solute-binding protein (BAB2_1146).

It localises to the cell inner membrane. Functionally, probably part of an ABC transporter complex. Probably Responsible for energy coupling to the transport system. The sequence is that of Putative ATP-binding protein BAB2_1147 from Brucella abortus (strain 2308).